Here is a 261-residue protein sequence, read N- to C-terminus: Cytochrome c oxidase subunit 3 (261 aa).

Over 1 to 15 (MAHQAHAYHMVDPSP) the chain is Mitochondrial matrix. The helical transmembrane segment at 16-34 (WPLTGAIAALLLTSGTAVW) threads the bilayer. Residues 35-40 (FHFHSL) are Mitochondrial intermembrane-facing. Residues 41-66 (TLLTLGNVLLLLTMYQWWRDIIREGT) traverse the membrane as a helical segment. The Mitochondrial matrix segment spans residues 67-72 (FQGHHT). Residues 73-105 (PPVQKGLRYGMILFITSEVFFFLGFFWAFYHAS) traverse the membrane as a helical segment. Residues 106-128 (LAPTPELGGCWPPTGITTLDPFE) are Mitochondrial intermembrane-facing. A helical membrane pass occupies residues 129-152 (VPLLNTAVLLASGVTVTWAHHSIM). At 153–155 (EGE) the chain is on the mitochondrial matrix side. A helical membrane pass occupies residues 156–183 (RKQTIQALTLTILLGFYFTFLQGMEYYE). The Mitochondrial intermembrane portion of the chain corresponds to 184 to 190 (APFTIAD). A helical membrane pass occupies residues 191–223 (GVYGSTFFVATGFHGLHVIIGSTFLAVCLLRQV). At 224–232 (QYHFTSEHH) the chain is on the mitochondrial matrix side. A helical membrane pass occupies residues 233-256 (FGFEAAAWYWHFVDVVWLFLYVSI). The Mitochondrial intermembrane segment spans residues 257-261 (YWWGS).

This sequence belongs to the cytochrome c oxidase subunit 3 family. As to quaternary structure, component of the cytochrome c oxidase (complex IV, CIV), a multisubunit enzyme composed of 14 subunits. The complex is composed of a catalytic core of 3 subunits MT-CO1, MT-CO2 and MT-CO3, encoded in the mitochondrial DNA, and 11 supernumerary subunits COX4I, COX5A, COX5B, COX6A, COX6B, COX6C, COX7A, COX7B, COX7C, COX8 and NDUFA4, which are encoded in the nuclear genome. The complex exists as a monomer or a dimer and forms supercomplexes (SCs) in the inner mitochondrial membrane with NADH-ubiquinone oxidoreductase (complex I, CI) and ubiquinol-cytochrome c oxidoreductase (cytochrome b-c1 complex, complex III, CIII), resulting in different assemblies (supercomplex SCI(1)III(2)IV(1) and megacomplex MCI(2)III(2)IV(2)).

It is found in the mitochondrion inner membrane. It carries out the reaction 4 Fe(II)-[cytochrome c] + O2 + 8 H(+)(in) = 4 Fe(III)-[cytochrome c] + 2 H2O + 4 H(+)(out). In terms of biological role, component of the cytochrome c oxidase, the last enzyme in the mitochondrial electron transport chain which drives oxidative phosphorylation. The respiratory chain contains 3 multisubunit complexes succinate dehydrogenase (complex II, CII), ubiquinol-cytochrome c oxidoreductase (cytochrome b-c1 complex, complex III, CIII) and cytochrome c oxidase (complex IV, CIV), that cooperate to transfer electrons derived from NADH and succinate to molecular oxygen, creating an electrochemical gradient over the inner membrane that drives transmembrane transport and the ATP synthase. Cytochrome c oxidase is the component of the respiratory chain that catalyzes the reduction of oxygen to water. Electrons originating from reduced cytochrome c in the intermembrane space (IMS) are transferred via the dinuclear copper A center (CU(A)) of subunit 2 and heme A of subunit 1 to the active site in subunit 1, a binuclear center (BNC) formed by heme A3 and copper B (CU(B)). The BNC reduces molecular oxygen to 2 water molecules using 4 electrons from cytochrome c in the IMS and 4 protons from the mitochondrial matrix. The protein is Cytochrome c oxidase subunit 3 (mt-co3) of Oncorhynchus masou (Cherry salmon).